The chain runs to 92 residues: Alpha-hemoglobin-stabilizing protein (92 aa).

It belongs to the AHSP family. In terms of assembly, monomer. Forms a heterodimer with free alpha-hemoglobin. Does not bind beta-hemoglobin nor alpha(2)beta(2) hemoglobin A.

Its subcellular location is the cytoplasm. Its function is as follows. Acts as a chaperone to prevent the harmful aggregation of alpha-hemoglobin during normal erythroid cell development. Specifically protects free alpha-hemoglobin from precipitation. The polypeptide is Alpha-hemoglobin-stabilizing protein (AHSP) (Bos taurus (Bovine)).